The primary structure comprises 188 residues: Capsid protein (188 aa).

Residues 150 to 181 (RRRGGARASRSPRRRTPSPRRRRSQSPRRRRS) are compositionally biased toward basic residues. Positions 150-188 (RRRGGARASRSPRRRTPSPRRRRSQSPRRRRSQSPSANC) are disordered. A phosphoserine; by host mark is found at Ser-160, Ser-167, and Ser-175. The 1; half-length repeat unit spans residues 160 to 166 (SPRRRTP). The 3 X 8 AA repeats of S-P-R-R-R-[PR]-S-Q stretch occupies residues 160–182 (SPRRRTPSPRRRRSQSPRRRRSQ). The short motif at 163-180 (RRTPSPRRRRSQSPRRRR) is the Bipartite nuclear localization signal element. A run of 2 repeats spans residues 167 to 174 (SPRRRRSQ) and 175 to 182 (SPRRRRSQ). Residues 182 to 188 (QSPSANC) are RNA binding.

The protein belongs to the orthohepadnavirus core antigen family. Homodimerizes, then multimerizes. Interacts with cytosol exposed regions of viral L glycoprotein present in the reticulum-to-Golgi compartment. Interacts with human FLNB. Phosphorylated form interacts with host importin alpha; this interaction depends on the exposure of the NLS, which itself depends upon genome maturation and/or phosphorylation of the capsid protein. Interacts with host NUP153. In terms of processing, phosphorylated by host SRPK1, SRPK2, and maybe protein kinase C or GAPDH. Phosphorylation is critical for pregenomic RNA packaging. Protein kinase C phosphorylation is stimulated by HBx protein and may play a role in transport of the viral genome to the nucleus at the late step during the viral replication cycle.

The protein resides in the virion. Its subcellular location is the host cytoplasm. Self assembles to form an icosahedral capsid. Most capsids appear to be large particles with an icosahedral symmetry of T=4 and consist of 240 copies of capsid protein, though a fraction forms smaller T=3 particles consisting of 180 capsid proteins. Entering capsids are transported along microtubules to the nucleus. Phosphorylation of the capsid is thought to induce exposure of nuclear localization signal in the C-terminal portion of the capsid protein that allows binding to the nuclear pore complex via the importin (karyopherin-) alpha and beta. Capsids are imported in intact form through the nuclear pore into the nuclear basket, where it probably binds NUP153. Only capsids that contain the mature viral genome can release the viral DNA and capsid protein into the nucleoplasm. Immature capsids get stuck in the basket. Capsids encapsulate the pre-genomic RNA and the P protein. Pre-genomic RNA is reverse-transcribed into DNA while the capsid is still in the cytoplasm. The capsid can then either be directed to the nucleus, providing more genomes for transcription, or bud through the endoplasmic reticulum to provide new virions. In Marmota monax (Woodchuck), this protein is Capsid protein.